The chain runs to 103 residues: Large ribosomal subunit protein bL21 (103 aa).

This sequence belongs to the bacterial ribosomal protein bL21 family. As to quaternary structure, part of the 50S ribosomal subunit. Contacts protein L20.

In terms of biological role, this protein binds to 23S rRNA in the presence of protein L20. The polypeptide is Large ribosomal subunit protein bL21 (Colwellia psychrerythraea (strain 34H / ATCC BAA-681) (Vibrio psychroerythus)).